Reading from the N-terminus, the 226-residue chain is Large ribosomal subunit protein uL1 (226 aa).

It belongs to the universal ribosomal protein uL1 family. Part of the 50S ribosomal subunit.

Binds directly to 23S rRNA. The L1 stalk is quite mobile in the ribosome, and is involved in E site tRNA release. Functionally, protein L1 is also a translational repressor protein, it controls the translation of the L11 operon by binding to its mRNA. This Mycoplasma pneumoniae (strain ATCC 29342 / M129 / Subtype 1) (Mycoplasmoides pneumoniae) protein is Large ribosomal subunit protein uL1.